The primary structure comprises 64 residues: Putative antitoxin MJ0975 (64 aa).

The protein belongs to the UPF0165 family.

Functionally, possibly the antitoxin component of a type II toxin-antitoxin (TA) system. Its cognate toxin is VapC2 (Potential). This Methanocaldococcus jannaschii (strain ATCC 43067 / DSM 2661 / JAL-1 / JCM 10045 / NBRC 100440) (Methanococcus jannaschii) protein is Putative antitoxin MJ0975 (vapB2).